The sequence spans 256 residues: Phosphatidylglycerol--prolipoprotein diacylglyceryl transferase (256 aa).

The next 3 helical transmembrane spans lie at 19-39 (VHWY…LGYW), 56-76 (LIFY…MLFY), and 91-111 (IWEG…AAWL). Residue Arg139 participates in a 1,2-diacyl-sn-glycero-3-phospho-(1'-sn-glycerol) binding. Residues 231 to 251 (FGWLTMGQVLSIPMLLIGIWL) form a helical membrane-spanning segment.

This sequence belongs to the Lgt family.

It is found in the cell inner membrane. It catalyses the reaction L-cysteinyl-[prolipoprotein] + a 1,2-diacyl-sn-glycero-3-phospho-(1'-sn-glycerol) = an S-1,2-diacyl-sn-glyceryl-L-cysteinyl-[prolipoprotein] + sn-glycerol 1-phosphate + H(+). The protein operates within protein modification; lipoprotein biosynthesis (diacylglyceryl transfer). Catalyzes the transfer of the diacylglyceryl group from phosphatidylglycerol to the sulfhydryl group of the N-terminal cysteine of a prolipoprotein, the first step in the formation of mature lipoproteins. This is Phosphatidylglycerol--prolipoprotein diacylglyceryl transferase from Legionella pneumophila (strain Lens).